The sequence spans 257 residues: 1-(5-phosphoribosyl)-5-[(5-phosphoribosylamino)methylideneamino] imidazole-4-carboxamide isomerase (257 aa).

The active-site Proton acceptor is Asp8. Residue Asp129 is the Proton donor of the active site.

This sequence belongs to the HisA/HisF family.

It is found in the cytoplasm. It carries out the reaction 1-(5-phospho-beta-D-ribosyl)-5-[(5-phospho-beta-D-ribosylamino)methylideneamino]imidazole-4-carboxamide = 5-[(5-phospho-1-deoxy-D-ribulos-1-ylimino)methylamino]-1-(5-phospho-beta-D-ribosyl)imidazole-4-carboxamide. It participates in amino-acid biosynthesis; L-histidine biosynthesis; L-histidine from 5-phospho-alpha-D-ribose 1-diphosphate: step 4/9. This is 1-(5-phosphoribosyl)-5-[(5-phosphoribosylamino)methylideneamino] imidazole-4-carboxamide isomerase from Trichodesmium erythraeum (strain IMS101).